The sequence spans 56 residues: Large ribosomal subunit protein bL32 (56 aa).

Over residues 1-16 (MAVQKSKKSRARRGMR) the composition is skewed to basic residues. Positions 1-56 (MAVQKSKKSRARRGMRRSHDAISGPSLTVDQTSGETHRRHHVTADGYYKGVQVISK) are disordered. The segment covering 25 to 34 (PSLTVDQTSG) has biased composition (polar residues).

The protein belongs to the bacterial ribosomal protein bL32 family.

This Pseudoalteromonas translucida (strain TAC 125) protein is Large ribosomal subunit protein bL32.